A 407-amino-acid polypeptide reads, in one-letter code: Na(+)-translocating NADH-quinone reductase subunit F (407 aa).

A helical membrane pass occupies residues 6–26 (IFLAIGMFTAIVLGLVAIILV). One can recognise a 2Fe-2S ferredoxin-type domain in the interval 35-127 (GDVTIQINGE…DMQIRVPEEV (93 aa)). [2Fe-2S] cluster-binding residues include C70, C76, C79, and C111. The region spanning 130–269 (VKKWECTVES…YGPFGEFFAK (140 aa)) is the FAD-binding FR-type domain. Positions 272-389 (EAEMVFIGGG…PMMNAAVIKM (118 aa)) are catalytic.

It belongs to the NqrF family. As to quaternary structure, composed of six subunits; NqrA, NqrB, NqrC, NqrD, NqrE and NqrF. [2Fe-2S] cluster is required as a cofactor. FAD serves as cofactor.

The protein resides in the cell inner membrane. The enzyme catalyses a ubiquinone + n Na(+)(in) + NADH + H(+) = a ubiquinol + n Na(+)(out) + NAD(+). Functionally, NQR complex catalyzes the reduction of ubiquinone-1 to ubiquinol by two successive reactions, coupled with the transport of Na(+) ions from the cytoplasm to the periplasm. The first step is catalyzed by NqrF, which accepts electrons from NADH and reduces ubiquinone-1 to ubisemiquinone by a one-electron transfer pathway. The polypeptide is Na(+)-translocating NADH-quinone reductase subunit F (Pseudomonas aeruginosa (strain ATCC 15692 / DSM 22644 / CIP 104116 / JCM 14847 / LMG 12228 / 1C / PRS 101 / PAO1)).